Reading from the N-terminus, the 634-residue chain is GTP-binding protein 4 (634 aa).

Ala-2 is modified (N-acetylalanine). Lys-103 is modified (N6-acetyllysine; alternate). Lys-103 is covalently cross-linked (Glycyl lysine isopeptide (Lys-Gly) (interchain with G-Cter in SUMO2); alternate). Phosphoserine is present on Ser-122. An OBG-type G domain is found at 169 to 340 (RTLLLCGYPN…VKTEACDRLL (172 aa)). GTP contacts are provided by residues 175–182 (GYPNVGKS), 221–225 (DTPGI), and 289–292 (NKCD). Residue Lys-332 forms a Glycyl lysine isopeptide (Lys-Gly) (interchain with G-Cter in SUMO2) linkage. Phosphoserine is present on residues Ser-468, Ser-470, and Ser-472. The segment at 495–517 (ILESKEKNTQGPRMPRTAKKVQR) is disordered. The residue at position 522 (Lys-522) is an N6-acetyllysine. The tract at residues 529 to 634 (VDMDDKDDAH…KRKAGKKDRR (106 aa)) is disordered. Residue Lys-534 forms a Glycyl lysine isopeptide (Lys-Gly) (interchain with G-Cter in SUMO2) linkage. The span at 544 to 554 (RRSRSITRKRK) shows a compositional bias: basic residues. Ser-558 bears the Phosphoserine mark. Over residues 560 to 572 (PPSSVARSGSCSR) the composition is skewed to polar residues. Basic and acidic residues predominate over residues 573 to 585 (TPRDVSGLRDVKM). Residues 586-604 (VKKAKTMMKNAQKKMNRLG) show a composition bias toward basic residues. Residues 605–618 (KKGEADRHVFDMKP) are compositionally biased toward basic and acidic residues. The segment covering 619–634 (KHLLSGKRKAGKKDRR) has biased composition (basic residues).

It belongs to the TRAFAC class OBG-HflX-like GTPase superfamily. OBG GTPase family. NOG subfamily. As to quaternary structure, associates with pre-60S ribosomal particles. Interacts with MINAS-60 (product of an alternative open reading frame of RBM10).

It is found in the nucleus. Its subcellular location is the nucleolus. In terms of biological role, involved in the biogenesis of the 60S ribosomal subunit. Acts as a TP53 repressor, preventing TP53 stabilization and cell cycle arrest. In Homo sapiens (Human), this protein is GTP-binding protein 4.